A 484-amino-acid chain; its full sequence is tRNA sulfurtransferase (484 aa).

Residues 63-167 form the THUMP domain; sequence EAFGERLACI…NEQLYLVDKR (105 aa). ATP-binding positions include 185-186, Lys267, Gly289, and Gln298; that span reads LI. The cysteines at positions 346 and 458 are disulfide-linked. Residues 406 to 484 form the Rhodanese domain; the sequence is ISADEVIIDV…GYSNVKVYRP (79 aa). Cys458 (cysteine persulfide intermediate) is an active-site residue.

It belongs to the ThiI family.

The protein localises to the cytoplasm. It carries out the reaction [ThiI sulfur-carrier protein]-S-sulfanyl-L-cysteine + a uridine in tRNA + 2 reduced [2Fe-2S]-[ferredoxin] + ATP + H(+) = [ThiI sulfur-carrier protein]-L-cysteine + a 4-thiouridine in tRNA + 2 oxidized [2Fe-2S]-[ferredoxin] + AMP + diphosphate. The catalysed reaction is [ThiS sulfur-carrier protein]-C-terminal Gly-Gly-AMP + S-sulfanyl-L-cysteinyl-[cysteine desulfurase] + AH2 = [ThiS sulfur-carrier protein]-C-terminal-Gly-aminoethanethioate + L-cysteinyl-[cysteine desulfurase] + A + AMP + 2 H(+). It participates in cofactor biosynthesis; thiamine diphosphate biosynthesis. Catalyzes the ATP-dependent transfer of a sulfur to tRNA to produce 4-thiouridine in position 8 of tRNAs, which functions as a near-UV photosensor. Also catalyzes the transfer of sulfur to the sulfur carrier protein ThiS, forming ThiS-thiocarboxylate. This is a step in the synthesis of thiazole, in the thiamine biosynthesis pathway. The sulfur is donated as persulfide by IscS. The chain is tRNA sulfurtransferase from Shewanella piezotolerans (strain WP3 / JCM 13877).